The primary structure comprises 258 residues: NAD kinase (258 aa).

Asp51 (proton acceptor) is an active-site residue. Residues 51–52, Lys56, 119–120, Lys130, Asp149, 160–165, and Ala184 each bind NAD(+); these read DG, ND, and TAYSLS.

The protein belongs to the NAD kinase family. Requires a divalent metal cation as cofactor.

It is found in the cytoplasm. It carries out the reaction NAD(+) + ATP = ADP + NADP(+) + H(+). Functionally, involved in the regulation of the intracellular balance of NAD and NADP, and is a key enzyme in the biosynthesis of NADP. Catalyzes specifically the phosphorylation on 2'-hydroxyl of the adenosine moiety of NAD to yield NADP. The sequence is that of NAD kinase from Thermotoga petrophila (strain ATCC BAA-488 / DSM 13995 / JCM 10881 / RKU-1).